Consider the following 582-residue polypeptide: ATP-dependent lipid A-core flippase (582 aa).

5 consecutive transmembrane segments (helical) span residues 16 to 36, 69 to 89, 153 to 173, 250 to 270, and 275 to 295; these read LWPH…ALVI, FIIL…GYCM, IIGL…VLVV, LANP…LYLA, and IKET…FGLL. An ABC transmembrane type-1 domain is found at 29–310; it reads VAVVALVINA…LTSVTSDFQR (282 aa). Residues 342–578 form the ABC transporter domain; the sequence is IKVDNVTFTY…DGAYAQLHRI (237 aa). 376–383 contacts ATP; it reads GRSGSGKS.

Belongs to the ABC transporter superfamily. Lipid exporter (TC 3.A.1.106) family. In terms of assembly, homodimer.

Its subcellular location is the cell inner membrane. It carries out the reaction ATP + H2O + lipid A-core oligosaccharideSide 1 = ADP + phosphate + lipid A-core oligosaccharideSide 2.. In terms of biological role, involved in lipopolysaccharide (LPS) biosynthesis. Translocates lipid A-core from the inner to the outer leaflet of the inner membrane. Transmembrane domains (TMD) form a pore in the inner membrane and the ATP-binding domain (NBD) is responsible for energy generation. The polypeptide is ATP-dependent lipid A-core flippase (Aliivibrio fischeri (strain ATCC 700601 / ES114) (Vibrio fischeri)).